The following is a 32-amino-acid chain: Secreted protein F2 (32 aa).

The protein localises to the secreted. In Globisporangium hypogynum (Pythium hypogynum), this protein is Secreted protein F2.